A 352-amino-acid chain; its full sequence is C5a anaphylatoxin chemotactic receptor 1 (352 aa).

The Extracellular portion of the chain corresponds to 1-38 (MASMNFSPPEYPDYGTATLDPNIFVDESLNTPKLSVPD). 2 positions are modified to sulfotyrosine: Tyr-11 and Tyr-14. Residues 39–65 (MIALVIFVMVFLVGVPGNFLVVWVTGF) traverse the membrane as a helical segment. Over 66–70 (EVRRT) the chain is Cytoplasmic. The helical transmembrane segment at 71 to 94 (INAIWFLNLAVADLLSCLALPILF) threads the bilayer. The Extracellular segment spans residues 95–111 (SSIVQQGYWPFGNAACR). Cys-110 and Cys-189 form a disulfide bridge. A helical transmembrane segment spans residues 112–133 (ILPSLILLNMYASILLLTTISA). The Cytoplasmic portion of the chain corresponds to 134 to 154 (DRFVLVFNPIWCQNYRGPQLA). A helical transmembrane segment spans residues 155 to 175 (WAACSVAWAVALLLTVPSFIF). The Extracellular segment spans residues 176–202 (RGVHTEYFPFWMTCGVDYSGVGVLVER). Residues 203-228 (GVAILRLLMGFLGPLVILSICYTFLL) form a helical membrane-spanning segment. The Cytoplasmic portion of the chain corresponds to 229-244 (IRTWSRKATRSTKTLK). A helical transmembrane segment spans residues 245–267 (VVVAVVVSFFVLWLPYQVTGMMM). Over 268 to 284 (ALFYKHSESFRRVSRLD) the chain is Extracellular. Residues 285-305 (SLCVAVAYINCCINPIIYVLA) traverse the membrane as a helical segment. The Cytoplasmic portion of the chain corresponds to 306–352 (AQGFHSRFLKSLPARLRQVLAEESVGRDSKSITLSTVDTPAQKSQGV). Phosphoserine is present on residues Ser-316, Ser-329, Ser-334, Ser-336, and Ser-340.

The protein belongs to the G-protein coupled receptor 1 family. Homodimer. May also form higher-order oligomers. Interacts (when phosphorylated) with ARRB1 and ARRB2; the interaction is associated with internalization of C5aR. Post-translationally, sulfation plays a critical role in the association of C5aR with C5a, but no significant role in the ability of the receptor to transduce a signal and mobilize calcium in response to a small peptide agonist. In terms of processing, phosphorylated on serine residues in response to C5a binding, resulting in internalization of the receptor and short-term desensitization to C5a.

Its subcellular location is the cell membrane. It localises to the cytoplasmic vesicle. Functionally, receptor for the chemotactic and inflammatory peptide anaphylatoxin C5a. The ligand interacts with at least two sites on the receptor: a high-affinity site on the extracellular N-terminus, and a second site in the transmembrane region which activates downstream signaling events. Receptor activation stimulates chemotaxis, granule enzyme release, intracellular calcium release and superoxide anion production. The polypeptide is C5a anaphylatoxin chemotactic receptor 1 (C5AR1) (Canis lupus familiaris (Dog)).